The chain runs to 521 residues: Cytochrome P450 monooxygenase ABA2 (521 aa).

The chain crosses the membrane as a helical span at residues 15 to 35 (AGHLGMAVTFTILVAFTIHVL). A glycan (N-linked (GlcNAc...) asparagine) is linked at Asn-366. Cys-458 provides a ligand contact to heme.

The protein belongs to the cytochrome P450 family. It depends on heme as a cofactor.

Its subcellular location is the membrane. Its pathway is hormone biosynthesis. Cytochrome P450 monooxygenase involved in the biosynthesis of abscisic acid (ABA), a phytohormone that acts antagonistically toward salicylic acid (SA), jasmonic acid (JA) and ethylene (ETH) signaling, to impede plant defense responses. During pathogen-host interaction, ABA plays a dual role in disease severity by increasing plant susceptibility and accelerating pathogenesis in the fungus itself. The first step of the pathway catalyzes the reaction from farnesyl diphosphate to alpha-ionylideneethane performed by the alpha-ionylideneethane synthase ABA3 via a three-step reaction mechanism involving 2 neutral intermediates, beta-farnesene and allofarnesene. The cytochrome P450 monooxygenase ABA1 might then be involved in the conversion of alpha-ionylideneethane to alpha-ionylideneacetic acid. Alpha-ionylideneacetic acid is further converted to abscisic acid in 2 steps involving the cytochrome P450 monooxygenase ABA2 and the short-chain dehydrogenase/reductase ABA4, via the intermediates 1'-deoxy-ABA or 1',4'-trans-diol-ABA, depending on the order of action of these 2 enzymes. ABA2 is responsible for the hydroxylation of carbon atom C-1' and ABA4 might be involved in the oxidation of the C-4' carbon atom. In Pyricularia oryzae (strain 70-15 / ATCC MYA-4617 / FGSC 8958) (Rice blast fungus), this protein is Cytochrome P450 monooxygenase ABA2.